An 864-amino-acid chain; its full sequence is Leukocyte tyrosine kinase receptor (864 aa).

A signal peptide spans 1-16 (MGCWGQLLVWFGAAGA). The Extracellular portion of the chain corresponds to 17 to 424 (ILCSSPGSQE…CMDLHKPPGP (408 aa)). Positions 30 to 40 (RSSPLPLASPS) are enriched in low complexity. Residues 30–64 (RSSPLPLASPSPRDPKVSAPPSILEPASPLNSPGT) form a disordered region. Disulfide bonds link C73-C86 and C168-C179. The disordered stretch occupies residues 239 to 297 (YLRPRDRGRTQASPEKLENRSEAPGSGGRGGAAGGGGGWTSRAPSPQAGRSLQEGAEGG). The span at 241 to 259 (RPRDRGRTQASPEKLENRS) shows a compositional bias: basic and acidic residues. Residue N257 is glycosylated (N-linked (GlcNAc...) asparagine). The segment covering 263-277 (GSGGRGGAAGGGGGW) has biased composition (gly residues). An intrachain disulfide couples C300 to C322. N-linked (GlcNAc...) asparagine glycosylation is found at N380 and N412. Residues 425-449 (LVLMVAVVATSTLSLLMVCGVLILV) traverse the membrane as a helical segment. The Cytoplasmic segment spans residues 450 to 864 (KQKKWQGLQE…QNLWNPTYRS (415 aa)). Residues 510-786 (VTLLRALGHG…LQYCTQDPDV (277 aa)) enclose the Protein kinase domain. ATP-binding positions include 516–524 (LGHGAFGEV) and K544. The active-site Proton acceptor is the D643. Y676 is subject to Phosphotyrosine; by autocatalysis. Disordered stretches follow at residues 790–830 (LLPM…KLKS) and 842–864 (SGLK…TYRS). Residues 852 to 864 (LQPQNLWNPTYRS) are compositionally biased toward polar residues.

It belongs to the protein kinase superfamily. Tyr protein kinase family. Insulin receptor subfamily. In terms of assembly, homodimer; homodimerizes following ligand-binding. Part of a complex including LTK, TNK2 and GRB2, in which GRB2 promotes LTK recruitment by TNK2. Post-translationally, phosphorylated at tyrosine residues by autocatalysis, which activates kinase activity. As to expression, expressed in non-hematopoietic cell lines and T- and B-cell lines.

The protein resides in the cell membrane. It carries out the reaction L-tyrosyl-[protein] + ATP = O-phospho-L-tyrosyl-[protein] + ADP + H(+). With respect to regulation, activated by ligand-binding, leading to homodimerization and autophosphorylation. In terms of biological role, receptor with a tyrosine-protein kinase activity. Following activation by ALKAL1 or ALKAL2 ligands at the cell surface, transduces an extracellular signal into an intracellular response. Ligand-binding to the extracellular domain induces tyrosine kinase activation, leading to activation of the mitogen-activated protein kinase (MAPK) pathway. Phosphorylates almost exclusively at the first tyrosine of the Y-x-x-x-Y-Y motif. The exact function of this protein is not known; studies with chimeric proteins demonstrate its ability to promote growth and specifically neurite outgrowth, and cell survival. Involved in regulation of the secretory pathway involving endoplasmic reticulum (ER) export sites (ERESs) and ER to Golgi transport. This is Leukocyte tyrosine kinase receptor from Homo sapiens (Human).